Here is a 102-residue protein sequence, read N- to C-terminus: Integration host factor subunit beta (102 aa).

This sequence belongs to the bacterial histone-like protein family. In terms of assembly, heterodimer of an alpha and a beta chain.

Functionally, this protein is one of the two subunits of integration host factor, a specific DNA-binding protein that functions in genetic recombination as well as in transcriptional and translational control. The polypeptide is Integration host factor subunit beta (Rhodopseudomonas palustris (strain BisA53)).